The sequence spans 551 residues: Cilia- and flagella-associated protein 45 (551 aa).

Disordered stretches follow at residues Met-1 to Val-30 and Arg-461 to Glu-489. Residues Asn-157–Arg-526 adopt a coiled-coil conformation.

Belongs to the CFAP45 family. In terms of assembly, microtubule inner protein component of sperm flagellar doublet microtubules. Interacts with AK8; dimerization with AK8 may create a cavity at the interface of the dimer that can accommodate AMP. Interacts with CFAP52. Interacts with ENKUR. Directly interacts with DNALI1. Interacts with DNAH11. Interacts with DNAI1. Expressed in respiratory cells and in sperm (at protein level). Expressed in nasopharyngeal epithelium and trachea.

Its subcellular location is the cytoplasm. It is found in the cytoskeleton. It localises to the cilium axoneme. The protein resides in the flagellum axoneme. The protein localises to the cell projection. Its subcellular location is the cilium. It is found in the flagellum. Microtubule inner protein (MIP) part of the dynein-decorated doublet microtubules (DMTs) in cilia axoneme, which is required for motile cilia beating. It is an AMP-binding protein that may facilitate dynein ATPase-dependent ciliary and flagellar beating via adenine nucleotide homeostasis. May function as a donor of AMP to AK8 and hence promote ADP production. This is Cilia- and flagella-associated protein 45 from Homo sapiens (Human).